We begin with the raw amino-acid sequence, 92 residues long: Non-specific lipid-transfer protein 2 (92 aa).

4 disulfides stabilise this stretch: Cys-4–Cys-52, Cys-14–Cys-28, Cys-29–Cys-74, and Cys-50–Cys-88.

It belongs to the plant LTP family. Expressed in seeds and, at very low levels, in pulp of fruit (at protein level).

Its function is as follows. Plant non-specific lipid-transfer proteins transfer phospholipids as well as galactolipids across membranes. May play a role in wax or cutin deposition in the cell walls of expanding epidermal cells and certain secretory tissues. This Actinidia deliciosa (Kiwi) protein is Non-specific lipid-transfer protein 2.